The sequence spans 309 residues: UDP-N-acetylenolpyruvoylglucosamine reductase (309 aa).

In terms of domain architecture, FAD-binding PCMH-type spans 25–188; that stretch reads RVGGPADWLF…TSVTLQGNRE (164 aa). The active site involves R168. The interval 202–231 is disordered; sequence AKRDATQPTKALTAGSTFRNPAGFSSTGQA. Residues 207 to 231 are compositionally biased toward polar residues; the sequence is TQPTKALTAGSTFRNPAGFSSTGQA. The Proton donor role is filled by S217. E299 is an active-site residue.

The protein belongs to the MurB family. FAD is required as a cofactor.

Its subcellular location is the cytoplasm. It catalyses the reaction UDP-N-acetyl-alpha-D-muramate + NADP(+) = UDP-N-acetyl-3-O-(1-carboxyvinyl)-alpha-D-glucosamine + NADPH + H(+). It participates in cell wall biogenesis; peptidoglycan biosynthesis. Functionally, cell wall formation. This Jannaschia sp. (strain CCS1) protein is UDP-N-acetylenolpyruvoylglucosamine reductase.